The sequence spans 341 residues: tRNA N6-adenosine threonylcarbamoyltransferase (341 aa).

Residues His-115 and His-119 each coordinate Fe cation. Substrate-binding positions include 137-141, Asp-170, Gly-183, Asp-187, and Asn-276; that span reads IVSGG. Asp-304 is a binding site for Fe cation.

This sequence belongs to the KAE1 / TsaD family. Requires Fe(2+) as cofactor.

The protein localises to the cytoplasm. It carries out the reaction L-threonylcarbamoyladenylate + adenosine(37) in tRNA = N(6)-L-threonylcarbamoyladenosine(37) in tRNA + AMP + H(+). Its function is as follows. Required for the formation of a threonylcarbamoyl group on adenosine at position 37 (t(6)A37) in tRNAs that read codons beginning with adenine. Is involved in the transfer of the threonylcarbamoyl moiety of threonylcarbamoyl-AMP (TC-AMP) to the N6 group of A37, together with TsaE and TsaB. TsaD likely plays a direct catalytic role in this reaction. The chain is tRNA N6-adenosine threonylcarbamoyltransferase from Staphylococcus aureus (strain MRSA252).